The sequence spans 76 residues: UPF0346 protein lhv_1069 (76 aa).

The protein belongs to the UPF0346 family.

This chain is UPF0346 protein lhv_1069, found in Lactobacillus helveticus (strain DPC 4571).